Consider the following 188-residue polypeptide: UPF0398 protein OEOE_1093 (188 aa).

It belongs to the UPF0398 family.

The chain is UPF0398 protein OEOE_1093 from Oenococcus oeni (strain ATCC BAA-331 / PSU-1).